Reading from the N-terminus, the 395-residue chain is WW domain-containing transcription regulator protein 1 (395 aa).

K46 is covalently cross-linked (Glycyl lysine isopeptide (Lys-Gly) (interchain with G-Cter in ubiquitin)). The disordered stretch occupies residues 52 to 116 (FFKEPDSGSH…AQQHAHLRQQ (65 aa)). Polar residues predominate over residues 61 to 70 (HSRQSSTDSS). Phosphoserine is present on S62. S89 carries the post-translational modification Phosphoserine; by LATS2. Residues 124-157 (LPLPPGWEMTFTATGQRYFLNHIEKITTWQDPRK) enclose the WW domain. The tract at residues 221-395 (PNALTTQQQQ…NKSEPFLTWL (175 aa)) is required for interaction with PALS1. Residues 224–258 (LTTQQQQQQKLRLQRIQMERERIRMRQEELMRQEA) are a coiled coil. The span at 277–293 (PAMSTDMRSVTNSSSDP) shows a compositional bias: polar residues. Positions 277–308 (PAMSTDMRSVTNSSSDPFLNGGPYHSREQSTD) are disordered. Residue S290 is modified to Phosphoserine. S306 is subject to Phosphoserine; by LATS2. Residues 389-395 (EPFLTWL) carry the PDZ-binding motif.

As to quaternary structure, binds to SLC9A3R2 via the PDZ motif at the plasma membrane. Binds to YWHAZ in vivo and in vitro through the phosphoserine-binding motif RSHSSP. Interacts (via coiled-coil domain) with SMAD2 (via MH1 domain), SMAD3 and SMAD4. Interacts with MED15. Interacts with PAX8 and NKX2-1. Interacts with TEAD1, TEAD2, TEAD3 and TEAD4. Interacts (via WW domain) with PALS1. Interacts with LATS1. Interacts with YAP1 (when phosphorylated at 'Ser-112'). Interacts (via WW domain) with PRRG4 (via cytoplasmic domain). Interacts (via WW domain) with AMOTL2 (via PPXY motif); the interaction promotes WWTR1/TAZ localization to the cytoplasm and tight junctions, thereby inhibiting its transcriptional coactivator properties. Interacts (via WW domain) with AMOT; the interaction facilitates translocation of WWTR1/TAZ to the cytoplasm. Post-translationally, phosphorylated by LATS2 and STK3/MST2. Phosphorylation by LATS2 results in creation of 14-3-3 binding sites, retention in the cytoplasm, and functional inactivation. Phosphorylation results in the inhibition of transcriptional coactivation through YWHAZ-mediated nuclear export. In terms of processing, ubiquitinated at Lys-46; leading to proteasomal degradation. Deubiquitinated and stabilized by UCHL1 at Lys-46; leading to inhibition of osteoclastogenesis. As to expression, highly expressed in kidney, heart, placenta and lung.

The protein resides in the nucleus. Its subcellular location is the cytoplasm. It localises to the cell membrane. The protein localises to the cell junction. It is found in the tight junction. In terms of biological role, transcriptional coactivator which acts as a downstream regulatory target in the Hippo signaling pathway that plays a pivotal role in organ size control and tumor suppression by restricting proliferation and promoting apoptosis. The core of this pathway is composed of a kinase cascade wherein STK3/MST2 and STK4/MST1, in complex with its regulatory protein SAV1, phosphorylates and activates LATS1/2 in complex with its regulatory protein MOB1, which in turn phosphorylates and inactivates YAP1 oncoprotein and WWTR1/TAZ. WWTR1 enhances PAX8 and NKX2-1/TTF1-dependent gene activation. In conjunction with YAP1, involved in the regulation of TGFB1-dependent SMAD2 and SMAD3 nuclear accumulation. Plays a key role in coupling SMADs to the transcriptional machinery such as the mediator complex. Regulates embryonic stem-cell self-renewal, promotes cell proliferation and epithelial-mesenchymal transition. This Mus musculus (Mouse) protein is WW domain-containing transcription regulator protein 1.